Here is a 214-residue protein sequence, read N- to C-terminus: Large ribosomal subunit protein uL29m (214 aa).

The protein belongs to the universal ribosomal protein uL29 family. In terms of assembly, component of the mitochondrial large ribosomal subunit. Mature mitochondrial ribosomes consist of a small (37S) and a large (54S) subunit. The 37S subunit contains at least 33 different proteins and 1 molecule of RNA (15S). The 54S subunit contains at least 45 different proteins and 1 molecule of RNA (21S).

The protein localises to the mitochondrion. The chain is Large ribosomal subunit protein uL29m (mrpl4) from Aspergillus terreus (strain NIH 2624 / FGSC A1156).